The primary structure comprises 348 residues: 11-beta-hydroxysteroid dehydrogenase A (348 aa).

Residues 10 to 30 traverse the membrane as a helical; Signal-anchor for type II membrane protein segment; the sequence is LIAPPFTFFFLLFFLPPFQIF. The Proline-knob signature appears at 13-26; sequence PPFTFFFLLFFLPP. NADP(+) is bound by residues 54–80, D105, and 132–135; these read GASSGIGESLAYEYAKRGACLVLAARR and NAGI. S184 is a binding site for substrate. The active-site Proton acceptor is the Y197. Residues 197 to 201 and K201 contribute to the NADP(+) site; that span reads YNASK.

It belongs to the short-chain dehydrogenases/reductases (SDR) family. Expressed in seeds (at protein level). Not expressed in stem, leaf or root (at protein level).

Its subcellular location is the lipid droplet. It is found in the membrane. It catalyses the reaction an 11beta-hydroxysteroid + NADP(+) = an 11-oxosteroid + NADPH + H(+). The catalysed reaction is an 11beta-hydroxysteroid + NAD(+) = an 11-oxosteroid + NADH + H(+). The enzyme catalyses corticosterone + NADP(+) = 11-dehydrocorticosterone + NADPH + H(+). It carries out the reaction corticosterone + NAD(+) = 11-dehydrocorticosterone + NADH + H(+). It catalyses the reaction 17beta-estradiol + NADP(+) = estrone + NADPH + H(+). The catalysed reaction is 17beta-estradiol + NAD(+) = estrone + NADH + H(+). In terms of biological role, has dehydrogenase activity against corticosterone (11 beta-hydroxysteroid) and estradiol (17 beta-hydroxysteroid), with higher activity against estradiol. Possesses higher dehydrogenase activity with NADP(+) than NAD(+) regardless of the sterol substrate. May be involved in signal transduction regulated by various sterols. The sequence is that of 11-beta-hydroxysteroid dehydrogenase A from Sesamum indicum (Oriental sesame).